The sequence spans 461 residues: Chromosomal replication initiator protein DnaA (461 aa).

Residues 1–83 (MTASLWQQCL…LHFAVGRRPT (83 aa)) form a domain I, interacts with DnaA modulators region. The interval 83 to 124 (TAATVQMNTAAAPVADVRIGPAITVPSWTSKQDAMPEINHKS) is domain II. Residues 125–341 (NINETYTFEN…GALNRVIANA (217 aa)) are domain III, AAA+ region. ATP contacts are provided by glycine 169, glycine 171, lysine 172, and threonine 173. The interval 342–461 (RFTGKPINID…YSNLIRTLSS (120 aa)) is domain IV, binds dsDNA.

Belongs to the DnaA family. Oligomerizes as a right-handed, spiral filament on DNA at oriC.

The protein resides in the cytoplasm. Functionally, plays an essential role in the initiation and regulation of chromosomal replication. ATP-DnaA binds to the origin of replication (oriC) to initiate formation of the DNA replication initiation complex once per cell cycle. Binds the DnaA box (a 9 base pair repeat at the origin) and separates the double-stranded (ds)DNA. Forms a right-handed helical filament on oriC DNA; dsDNA binds to the exterior of the filament while single-stranded (ss)DNA is stabiized in the filament's interior. The ATP-DnaA-oriC complex binds and stabilizes one strand of the AT-rich DNA unwinding element (DUE), permitting loading of DNA polymerase. After initiation quickly degrades to an ADP-DnaA complex that is not apt for DNA replication. Binds acidic phospholipids. The polypeptide is Chromosomal replication initiator protein DnaA (Tolumonas auensis (strain DSM 9187 / NBRC 110442 / TA 4)).